A 364-amino-acid polypeptide reads, in one-letter code: DNA replication and repair protein RecF (364 aa).

Residue G30–T37 coordinates ATP.

The protein belongs to the RecF family.

It localises to the cytoplasm. The RecF protein is involved in DNA metabolism; it is required for DNA replication and normal SOS inducibility. RecF binds preferentially to single-stranded, linear DNA. It also seems to bind ATP. The chain is DNA replication and repair protein RecF from Clostridium botulinum (strain Langeland / NCTC 10281 / Type F).